The chain runs to 93 residues: Small ribosomal subunit protein uS19 (93 aa).

It belongs to the universal ribosomal protein uS19 family.

Functionally, protein S19 forms a complex with S13 that binds strongly to the 16S ribosomal RNA. The chain is Small ribosomal subunit protein uS19 from Blochmanniella floridana.